The chain runs to 955 residues: Vacuolar membrane protease (955 aa).

At Met-1–Arg-16 the chain is on the cytoplasmic side. Residues Trp-17–Val-37 traverse the membrane as a helical segment. Residues His-38 to Thr-390 are Vacuolar-facing. 2 N-linked (GlcNAc...) asparagine glycosylation sites follow: Asn-53 and Asn-119. The Zn(2+) site is built by His-174 and Asp-186. Glu-220 functions as the Proton acceptor in the catalytic mechanism. 3 residues coordinate Zn(2+): Glu-221, Glu-246, and His-319. A helical transmembrane segment spans residues Leu-391–Ile-411. Residues Ala-412–Gly-442 lie on the Cytoplasmic side of the membrane. A helical membrane pass occupies residues Phe-443–Leu-463. Over Val-464–His-473 the chain is Vacuolar. The helical transmembrane segment at Ser-474–Val-494 threads the bilayer. Over Ser-495 to Arg-508 the chain is Cytoplasmic. Residues Ile-509–Tyr-529 form a helical membrane-spanning segment. At Ala-530–Arg-533 the chain is on the vacuolar side. Residues Gly-534–Ile-554 form a helical membrane-spanning segment. Residues Ser-555–Trp-656 lie on the Cytoplasmic side of the membrane. Low complexity predominate over residues Ser-574 to Ser-590. Residues Ser-574–Ser-611 form a disordered region. Acidic residues predominate over residues Gly-591 to Thr-603. The helical transmembrane segment at Val-657–Leu-677 threads the bilayer. The Vacuolar segment spans residues Thr-678 to Leu-693. The chain crosses the membrane as a helical span at residues Phe-694–Ile-714. Residues His-715–Val-721 lie on the Cytoplasmic side of the membrane. Residues Pro-722–Phe-742 form a helical membrane-spanning segment. The Vacuolar portion of the chain corresponds to Ser-743–Asp-955. The N-linked (GlcNAc...) asparagine glycan is linked to Asn-826.

It belongs to the peptidase M28 family. Zn(2+) serves as cofactor.

Its subcellular location is the vacuole membrane. Its function is as follows. May be involved in vacuolar sorting and osmoregulation. The chain is Vacuolar membrane protease from Aspergillus oryzae (strain ATCC 42149 / RIB 40) (Yellow koji mold).